The sequence spans 159 residues: Trafficking protein particle complex subunit 6A (159 aa).

Ser33 carries the post-translational modification Phosphoserine.

Belongs to the TRAPP small subunits family. BET3 subfamily. As to quaternary structure, part of the multisubunit transport protein particle (TRAPP) complex. Heterodimer with TRAPPC3. The heterodimer TRAPPC3-TRAPPC6A interacts with TRAPPC2L. Interacts with TRAPPC2L. As to expression, ubiquitous, with lowest expression in skeletal muscle and brain and highest in kidney, liver and testis, as well as in cultured melanocytes.

Its subcellular location is the golgi apparatus. It localises to the cis-Golgi network. The protein resides in the endoplasmic reticulum. Its function is as follows. May play a role in vesicular transport during the biogenesis of melanosomes. The protein is Trafficking protein particle complex subunit 6A of Mus musculus (Mouse).